We begin with the raw amino-acid sequence, 443 residues long: Sulfoquinovose isomerase (443 aa).

Belongs to the SqvD family.

The enzyme catalyses 6-sulfo-beta-D-quinovose = 6-deoxy-6-sulfo-D-fructose. In terms of biological role, part of the sulfo-EMP2 pathway, a D-sulfoquinovose degradation pathway that produces sulfolactate (SL). Catalyzes the isomerization of sulfoquinovose (SQ) to 6-deoxy-6-sulfo-D-fructose (SF). This chain is Sulfoquinovose isomerase, found in Alkalicoccus urumqiensis (Bacillus urumqiensis).